Consider the following 398-residue polypeptide: Inner membrane protein YjgN (398 aa).

At Met-1 to Tyr-24 the chain is on the cytoplasmic side. Residues Phe-25–Trp-45 traverse the membrane as a helical segment. The Periplasmic segment spans residues Ala-46–Asn-73. The chain crosses the membrane as a helical span at residues Val-74–Ala-94. Residue Asp-95 is a topological domain, cytoplasmic. Residues Met-96–Ala-116 traverse the membrane as a helical segment. Over Lys-117–Phe-142 the chain is Periplasmic. Residues Trp-143 to Ile-163 traverse the membrane as a helical segment. Topologically, residues Ser-164–Ser-175 are cytoplasmic. Residues Val-176–Gly-196 traverse the membrane as a helical segment. The Periplasmic portion of the chain corresponds to Thr-197–Lys-228. A helical transmembrane segment spans residues Tyr-229–Phe-249. Residues Asp-250–Lys-278 lie on the Cytoplasmic side of the membrane. Residues Met-279–Val-299 form a helical membrane-spanning segment. Topologically, residues Ser-300–Ala-333 are periplasmic. The chain crosses the membrane as a helical span at residues Leu-334–Ile-354. The Cytoplasmic portion of the chain corresponds to Asp-355–Leu-398.

The protein resides in the cell inner membrane. The sequence is that of Inner membrane protein YjgN (yjgN) from Escherichia coli (strain K12).